The sequence spans 282 residues: Large ribosomal subunit protein uL4c (282 aa).

The N-terminal 43 residues, 1–43 (MAASLSFFSSSIFLSNPNIQSSKHLLFRSPKQLSVAAIATIRS), are a transit peptide targeting the chloroplast. Disordered regions lie at residues 86–133 (RNQR…GGVV) and 251–282 (RYGD…ESSE). Residues 255-282 (ENEWEDEEEDDQEDNDGGEAEESTESSE) are compositionally biased toward acidic residues.

Belongs to the universal ribosomal protein uL4 family. As to quaternary structure, part of the 50S ribosomal subunit.

Its subcellular location is the plastid. It is found in the chloroplast. In terms of biological role, this protein binds directly and specifically to 23S rRNA. May play a role in plastid transcriptional regulation. The polypeptide is Large ribosomal subunit protein uL4c (RPL4) (Nicotiana tabacum (Common tobacco)).